A 489-amino-acid chain; its full sequence is 2-(3-amino-3-carboxypropyl)histidine synthase subunit 2 (489 aa).

Met-1 carries the N-acetylmethionine modification. Residue Ser-7 is modified to Phosphoserine. Residues Cys-89, Cys-110, and Cys-341 each contribute to the [4Fe-4S] cluster site. Ser-446 is subject to Phosphoserine. A Phosphothreonine modification is found at Thr-467. Ser-488 bears the Phosphoserine mark.

The protein belongs to the DPH1/DPH2 family. DPH2 subfamily. As to quaternary structure, component of the 2-(3-amino-3-carboxypropyl)histidine synthase complex composed of DPH1, DPH2, DPH3 and a NADH-dependent reductase. Interacts with DPH1. [4Fe-4S] cluster is required as a cofactor.

Its pathway is protein modification; peptidyl-diphthamide biosynthesis. Functionally, required for the first step of diphthamide biosynthesis, a post-translational modification of histidine which occurs in elongation factor 2. DPH1 and DPH2 transfer a 3-amino-3-carboxypropyl (ACP) group from S-adenosyl-L-methionine (SAM) to a histidine residue, the reaction is assisted by a reduction system comprising DPH3 and a NADH-dependent reductase. Facilitates the reduction of the catalytic iron-sulfur cluster found in the DPH1 subunit. In Mus musculus (Mouse), this protein is 2-(3-amino-3-carboxypropyl)histidine synthase subunit 2 (Dph2).